A 102-amino-acid chain; its full sequence is MTLTLGHFLSLGAMLFALSVIGIFLNRKNLIVLLMAIELMLLAVNMNFVAFSYYLGDMHGQIFVFFILTVAAAESAIGLALLVLLFRNKSNINVDELNSLKG.

Transmembrane regions (helical) follow at residues 5–25 (LGHFLSLGAMLFALSVIGIFL), 31–51 (IVLLMAIELMLLAVNMNFVAF), and 62–82 (IFVFFILTVAAAESAIGLALL).

Belongs to the complex I subunit 4L family. As to quaternary structure, NDH-1 is composed of 14 different subunits. Subunits NuoA, H, J, K, L, M, N constitute the membrane sector of the complex.

It localises to the cell inner membrane. It catalyses the reaction a quinone + NADH + 5 H(+)(in) = a quinol + NAD(+) + 4 H(+)(out). Its function is as follows. NDH-1 shuttles electrons from NADH, via FMN and iron-sulfur (Fe-S) centers, to quinones in the respiratory chain. The immediate electron acceptor for the enzyme in this species is believed to be ubiquinone. Couples the redox reaction to proton translocation (for every two electrons transferred, four hydrogen ions are translocated across the cytoplasmic membrane), and thus conserves the redox energy in a proton gradient. In Variovorax paradoxus (strain S110), this protein is NADH-quinone oxidoreductase subunit K.